A 320-amino-acid polypeptide reads, in one-letter code: Malate dehydrogenase (320 aa).

Residues 10 to 15 (GAGQIG) and aspartate 34 each bind NAD(+). 2 residues coordinate substrate: arginine 83 and arginine 89. NAD(+) contacts are provided by residues asparagine 96 and 119 to 121 (ITN). Substrate contacts are provided by asparagine 121 and arginine 152. Histidine 176 (proton acceptor) is an active-site residue.

It belongs to the LDH/MDH superfamily. MDH type 3 family.

The enzyme catalyses (S)-malate + NAD(+) = oxaloacetate + NADH + H(+). Functionally, catalyzes the reversible oxidation of malate to oxaloacetate. The protein is Malate dehydrogenase of Ruegeria pomeroyi (strain ATCC 700808 / DSM 15171 / DSS-3) (Silicibacter pomeroyi).